Here is a 614-residue protein sequence, read N- to C-terminus: Sodium- and chloride-dependent betaine transporter (614 aa).

At 1–44 (MDRKVAVHEDGYPVVSWVPEEGEMMDQKGKDQVKDRGQWTNKME) the chain is on the cytoplasmic side. Helical transmembrane passes span 45-65 (FVLSVAGEIIGLGNVWRFPYL), 73-92 (AFFIPYFIFFFSCGIPVFFL), and 117-137 (GIGMASVVIESYLNIYYIIIL). At 138-210 (AWALFYLFSS…SGIHDLGSLR (73 aa)) the chain is on the extracellular side. C157 and C166 form a disulfide bridge. N-linked (GlcNAc...) asparagine glycans are attached at residues N171 and N183. Helical transmembrane passes span 211 to 229 (WELALCLLLAWIICYFCIW), 238 to 255 (VVYFTATFPYLMLIILLI), 291 to 308 (IFFSFAICQGCLTALGSY), 320 to 341 (IALCFLNSATSFVAGFVVFSIL), 374 to 393 (MPLSQLWSCLFFIMLLFLGL), 423 to 441 (VLILAISVLCYLMGLLLVT), 458 to 478 (GICLLFLSLFEVICIGWVYGA), 499 to 518 (ISWLFLTPGLCLATFFFSLS), and 538 to 556 (IGWLLAFSSMACVPLFIII). The Cytoplasmic portion of the chain corresponds to 557–614 (TFLKTQGSFKKRLRRLITPDPSLPQPGRRPPQDGSSAQNCSSSPAKQELIAWEKETHL). The tract at residues 574-602 (TPDPSLPQPGRRPPQDGSSAQNCSSSPAK) is disordered. Over residues 589–601 (DGSSAQNCSSSPA) the composition is skewed to polar residues.

This sequence belongs to the sodium:neurotransmitter symporter (SNF) (TC 2.A.22) family. SLC6A12 subfamily. In terms of assembly, interacts with LIN7C. In terms of tissue distribution, predominantly expressed in the liver (sinusoidal hepatocyte plasma membranes), also present in the renal medulla, where it localizes to the basolateral membranes of collecting ducts (particularly at the papilla tip) and the thick ascending limbs of Henle (at protein level). Some expression is detected in the leptomeninges, but no expression is detected in brain parenchyma, brain blood vessels, ependymal cells, the renal cortex and the intestine.

The protein resides in the basolateral cell membrane. Its subcellular location is the cell membrane. It catalyses the reaction 4-aminobutanoate(out) + chloride(out) + 3 Na(+)(out) = 4-aminobutanoate(in) + chloride(in) + 3 Na(+)(in). The enzyme catalyses glycine betaine(out) + 2 chloride(out) + 3 Na(+)(out) = glycine betaine(in) + 2 chloride(in) + 3 Na(+)(in). Transporter that mediates cellular uptake of betaine and GABA in a sodium- and chloride-dependent process. May have a role in regulation of GABAergic transmission in the brain through the reuptake of GABA into presynaptic terminals, as well as in osmotic regulation. Probably also involved in renal and hepatic osmotic regulation. The chain is Sodium- and chloride-dependent betaine transporter (Slc6a12) from Mus musculus (Mouse).